A 1517-amino-acid chain; its full sequence is DNA-directed RNA polymerase subunit beta' (1517 aa).

Residues C71, C73, C86, and C89 each coordinate Zn(2+). Mg(2+) is bound by residues D482, D484, and D486. C812, C886, C893, and C896 together coordinate Zn(2+).

This sequence belongs to the RNA polymerase beta' chain family. In terms of assembly, the RNAP catalytic core consists of 2 alpha, 1 beta, 1 beta' and 1 omega subunit. When a sigma factor is associated with the core the holoenzyme is formed, which can initiate transcription. Mg(2+) serves as cofactor. The cofactor is Zn(2+).

It carries out the reaction RNA(n) + a ribonucleoside 5'-triphosphate = RNA(n+1) + diphosphate. In terms of biological role, DNA-dependent RNA polymerase catalyzes the transcription of DNA into RNA using the four ribonucleoside triphosphates as substrates. The chain is DNA-directed RNA polymerase subunit beta' from Campylobacter jejuni (strain RM1221).